Reading from the N-terminus, the 576-residue chain is K(+)/H(+) antiporter NhaP2 (576 aa).

13 helical membrane passes run 6 to 26, 34 to 54, 58 to 78, 87 to 107, 109 to 129, 163 to 183, 185 to 205, 219 to 239, 242 to 262, 271 to 291, 299 to 319, 335 to 355, and 359 to 379; these read INSF…LSPM, ILLI…GGIL, YSTA…DGGM, VALW…TSIT, MMAA…GAIV, PMAV…DTEM, FSFM…LGLG, LADG…YAAS, LGGS…NKPT, VLDG…GLLL, ILIP…PVAV, WFIS…VFPM, and LPGA…SLLV. In terms of domain architecture, RCK C-terminal spans 405 to 486; sequence SGVEIYPSSE…LEALSNLFSQ (82 aa).

It belongs to the monovalent cation:proton antiporter 1 (CPA1) transporter (TC 2.A.36) family. NhaP2 subfamily.

The protein localises to the cell inner membrane. The catalysed reaction is K(+)(in) + H(+)(out) = K(+)(out) + H(+)(in). In terms of biological role, k(+)/H(+) antiporter that extrudes potassium in exchange for external protons and maintains the internal concentration of potassium under toxic levels. This chain is K(+)/H(+) antiporter NhaP2, found in Shewanella baltica (strain OS223).